The chain runs to 226 residues: Pyridoxal 5'-phosphate synthase subunit Pdx2 (226 aa).

L-glutamine is bound at residue Gly52–Ser54. Cys87 acts as the Nucleophile in catalysis. Residues Arg124 and Ile156–Arg157 contribute to the L-glutamine site. Active-site charge relay system residues include His199 and Glu201.

The protein belongs to the glutaminase PdxT/SNO family. As to quaternary structure, in the presence of PdxS, forms a dodecamer of heterodimers. Only shows activity in the heterodimer.

The catalysed reaction is aldehydo-D-ribose 5-phosphate + D-glyceraldehyde 3-phosphate + L-glutamine = pyridoxal 5'-phosphate + L-glutamate + phosphate + 3 H2O + H(+). It catalyses the reaction L-glutamine + H2O = L-glutamate + NH4(+). The protein operates within cofactor biosynthesis; pyridoxal 5'-phosphate biosynthesis. Catalyzes the hydrolysis of glutamine to glutamate and ammonia as part of the biosynthesis of pyridoxal 5'-phosphate. The resulting ammonia molecule is channeled to the active site of PdxS. The polypeptide is Pyridoxal 5'-phosphate synthase subunit Pdx2 (Plasmodium berghei).